Consider the following 216-residue polypeptide: Sperm microtubule inner protein 8 (216 aa).

As to quaternary structure, microtubule inner protein component of sperm flagellar doublet microtubules. As to expression, expressed in testis, prostate and placenta.

It is found in the cytoplasm. The protein localises to the cytoskeleton. Its subcellular location is the flagellum axoneme. In terms of biological role, microtubule inner protein (MIP) part of the dynein-decorated doublet microtubules (DMTs) in flagellum axoneme. May serve to reinforce and thus stabilize the microtubule structure in the sperm flagella. This is Sperm microtubule inner protein 8 from Homo sapiens (Human).